We begin with the raw amino-acid sequence, 412 residues long: BSD domain-containing protein 1 (412 aa).

The region spanning 145 to 197 is the BSD domain; it reads WLSTFSLEERKAEISELLVSSPAIRALYTKMVPAAVAHAEFWQRYFYKVFQLE. Positions 208-217 are enriched in basic and acidic residues; that stretch reads QRAEQTDHSE. Disordered stretches follow at residues 208–227, 253–272, and 298–412; these read QRAE…EDEE, VTVA…ASLS, and ESVT…ENWE. 2 stretches are compositionally biased toward polar residues: residues 259–272 and 298–308; these read PESS…ASLS and ESVTIRVTQPS. Ser-308 carries the post-translational modification Phosphoserine. Over residues 328-349 the composition is skewed to basic and acidic residues; that stretch reads PEERPAPREETAREDMAQDLRV. Polar residues predominate over residues 353–372; sequence NSDSGKSTPSNNGKKGSSTD. 2 stretches are compositionally biased toward acidic residues: residues 373–390 and 400–412; these read VSED…EEEV and TEEL…ENWE.

This Danio rerio (Zebrafish) protein is BSD domain-containing protein 1 (bsdc1).